Consider the following 1025-residue polypeptide: Multidrug resistance protein MdtC (1025 aa).

The next 12 helical transmembrane spans lie at Phe-3 to Leu-23, Glu-333 to Leu-353, Ile-360 to Cys-380, Leu-387 to Leu-407, Val-431 to Leu-451, Phe-463 to Pro-483, Leu-528 to Pro-548, Val-853 to Ser-873, Val-875 to Leu-895, Leu-897 to Val-917, Pro-953 to Gly-973, and Ile-984 to Val-1004.

The protein belongs to the resistance-nodulation-cell division (RND) (TC 2.A.6) family. MdtC subfamily. As to quaternary structure, part of a tripartite efflux system composed of MdtA, MdtB and MdtC. MdtC forms a heteromultimer with MdtB.

It localises to the cell inner membrane. The MdtABC tripartite complex confers resistance against novobiocin and deoxycholate. The sequence is that of Multidrug resistance protein MdtC from Escherichia coli (strain 55989 / EAEC).